A 235-amino-acid polypeptide reads, in one-letter code: Transcription factor hepR (235 aa).

The disordered stretch occupies residues Gln-14 to Lys-45. Residues Ile-175 to His-205 form a C2H2-type zinc finger.

It is found in the nucleus. In terms of biological role, transcription factor; part of the gene cluster that mediates the biosynthesis of heptelidic acid (HA), a sesquiterpene lactone that acts as an inhibitor of glyceraldehyde-3-phosphatedehydrogenase (GAPDH) and a growth inhibitor of the salt-tolerant lactic acid bacteria in soy sauce brewing. Both hepR and hepS regulate the transcription of the heptelidic acid cluster, but they are not involved in mutual transcriptional regulation and act with different mechanisms. This Aspergillus oryzae (strain ATCC 42149 / RIB 40) (Yellow koji mold) protein is Transcription factor hepR.